The primary structure comprises 507 residues: Inositol-3-phosphate synthase (507 aa).

Residues G70, G71, N72, N73, D143, I180, Q190, R193, T230, A231, N232, T233, G281, S282, D306, S309, N340, N341, D342, K355, A391, D419, and S420 each coordinate NAD(+).

The protein belongs to the myo-inositol 1-phosphate synthase family. It depends on NAD(+) as a cofactor.

The protein resides in the cytoplasm. It is found in the cytosol. Its subcellular location is the nucleus. It carries out the reaction D-glucose 6-phosphate = 1D-myo-inositol 3-phosphate. Its pathway is polyol metabolism; myo-inositol biosynthesis; myo-inositol from D-glucose 6-phosphate: step 1/2. In terms of biological role, key enzyme in myo-inositol biosynthesis pathway that catalyzes the conversion of glucose 6-phosphate to 1-myo-inositol 1-phosphate in a NAD-dependent manner. The protein is Inositol-3-phosphate synthase of Citrus paradisi (Grapefruit).